The sequence spans 794 residues: DNA ligase (794 aa).

Residues 35-39 (DAEYD), 84-85 (SL), and Glu-126 each bind NAD(+). Catalysis depends on Lys-128, which acts as the N6-AMP-lysine intermediate. Arg-149, Glu-186, Lys-302, and Lys-326 together coordinate NAD(+). Positions 420, 423, 450, and 456 each coordinate Zn(2+). In terms of domain architecture, BRCT spans 711 to 794 (VEGLPLAGQT…KLFDEHGVAR (84 aa)).

Belongs to the NAD-dependent DNA ligase family. LigA subfamily. Mg(2+) serves as cofactor. The cofactor is Mn(2+).

It catalyses the reaction NAD(+) + (deoxyribonucleotide)n-3'-hydroxyl + 5'-phospho-(deoxyribonucleotide)m = (deoxyribonucleotide)n+m + AMP + beta-nicotinamide D-nucleotide.. Its function is as follows. DNA ligase that catalyzes the formation of phosphodiester linkages between 5'-phosphoryl and 3'-hydroxyl groups in double-stranded DNA using NAD as a coenzyme and as the energy source for the reaction. It is essential for DNA replication and repair of damaged DNA. The chain is DNA ligase from Pseudomonas aeruginosa (strain UCBPP-PA14).